The primary structure comprises 232 residues: Clarin-2 (232 aa).

Residues 10 to 30 (YGLASLLSFSSFILIIVALVV) traverse the membrane as a helical segment. Asn-48 carries an N-linked (GlcNAc...) asparagine glycan. The next 3 membrane-spanning stretches (helical) occupy residues 101–121 (ILLLLFLALALALVSMGFAIL), 139–159 (LWNVLAGGVVALAIASFVAAV), and 188–208 (SFWICVASASAHAANLVVVAI).

This sequence belongs to the clarin family.

It is found in the cell projection. It localises to the stereocilium membrane. Functionally, plays a key role to hearing function. Required for normal organization and maintenance of the stereocilia bundle and for mechano-electrical transduction. The chain is Clarin-2 from Homo sapiens (Human).